Consider the following 90-residue polypeptide: uncharacterized protein (90 aa).

Positions 1–20 are cleaved as a signal peptide; sequence MAYKMLQVVLCSTLLIGALG.

This is an uncharacterized protein from Homo sapiens (Human).